A 417-amino-acid chain; its full sequence is Serine hydroxymethyltransferase (417 aa).

(6S)-5,6,7,8-tetrahydrofolate contacts are provided by residues Leu121 and 125 to 127 (GHL). At Lys229 the chain carries N6-(pyridoxal phosphate)lysine. A (6S)-5,6,7,8-tetrahydrofolate-binding site is contributed by 355–357 (SPF).

Belongs to the SHMT family. Homodimer. Pyridoxal 5'-phosphate is required as a cofactor.

It is found in the cytoplasm. It catalyses the reaction (6R)-5,10-methylene-5,6,7,8-tetrahydrofolate + glycine + H2O = (6S)-5,6,7,8-tetrahydrofolate + L-serine. The protein operates within one-carbon metabolism; tetrahydrofolate interconversion. It functions in the pathway amino-acid biosynthesis; glycine biosynthesis; glycine from L-serine: step 1/1. In terms of biological role, catalyzes the reversible interconversion of serine and glycine with tetrahydrofolate (THF) serving as the one-carbon carrier. This reaction serves as the major source of one-carbon groups required for the biosynthesis of purines, thymidylate, methionine, and other important biomolecules. Also exhibits THF-independent aldolase activity toward beta-hydroxyamino acids, producing glycine and aldehydes, via a retro-aldol mechanism. This Sodalis glossinidius (strain morsitans) protein is Serine hydroxymethyltransferase.